We begin with the raw amino-acid sequence, 185 residues long: Neuronal vesicle trafficking-associated protein 1 (185 aa).

The Cytoplasmic segment spans residues 1 to 82; sequence MVKLGNNFAE…ITEGVTERFK (82 aa). The chain crosses the membrane as a helical; Signal-anchor for type II membrane protein span at residues 83 to 103; it reads VSVLVLFALAFLTCVVFLVVY. At 104 to 185 the chain is on the lumenal side; that stretch reads KVYKYDRACP…QETEAAEKSA (82 aa). Residues 129–164 are required for GRIP1 interaction; sequence ESYYTEQDSSAREKFYTVINHYNVAKQSITRSVSPW.

It belongs to the NSG family. In terms of assembly, forms a complex with GRIP1, GRIA2 and STX12 through direct interaction with GRIP1; controls the intracellular fate of AMPAR and the endosomal sorting of the GRIA2 subunit toward recycling and membrane targeting. Interacts with STX12. Interacts with APP; could regulate APP processing. Interacts with FAM171A1. Pituitary and less in adrenal gland and testis. Expressed in the hippocampus throughout development. At P0, highly and broadly expressed throughout the cortical plate, but is down-regulated overall at P8 and P14, but remains relatively enriched in layer V. At P0 is expressed ubiquitously in the developing cerebellum namely Purkinje neurons as well as granule neurons. However, it becomes restricted to Purkinje cells by P8. This exclusive expression in Purkinje cells is maintained throughout adulthood.

The protein localises to the membrane. It is found in the golgi apparatus. It localises to the trans-Golgi network membrane. Its subcellular location is the endosome membrane. The protein resides in the cell projection. The protein localises to the dendrite. It is found in the early endosome membrane. It localises to the late endosome membrane. Its subcellular location is the lysosome lumen. The protein resides in the recycling endosome membrane. The protein localises to the cytoplasmic vesicle membrane. It is found in the golgi stack membrane. It localises to the endosome. Its subcellular location is the multivesicular body membrane. The protein resides in the endoplasmic reticulum membrane. Functionally, plays a role in the recycling mechanism in neurons of multiple receptors, including AMPAR, APP and L1CAM and acts at the level of early endosomes to promote sorting of receptors toward a recycling pathway. Regulates sorting and recycling of GRIA2 through interaction with GRIP1 and then contributes to the regulation of synaptic transmission and plasticity by affecting the recycling and targeting of AMPA receptors to the synapse. Is required for faithful sorting of L1CAM to axons by facilitating trafficking from somatodendritic early endosome or the recycling endosome. In an other hand, induces apoptosis via the activation of CASP3 in response to DNA damage. This is Neuronal vesicle trafficking-associated protein 1 from Mus musculus (Mouse).